Here is a 955-residue protein sequence, read N- to C-terminus: Leucine--tRNA ligase (955 aa).

The short motif at 51–61 is the 'HIGH' region element; it reads PYLNGVLHAGH. Residues 647–651 carry the 'KMSKS' region motif; the sequence is KLSKS. K650 is a binding site for ATP.

It belongs to the class-I aminoacyl-tRNA synthetase family.

The protein localises to the cytoplasm. The catalysed reaction is tRNA(Leu) + L-leucine + ATP = L-leucyl-tRNA(Leu) + AMP + diphosphate. The sequence is that of Leucine--tRNA ligase from Methanococcus maripaludis (strain DSM 14266 / JCM 13030 / NBRC 101832 / S2 / LL).